The primary structure comprises 819 residues: Protein kinase C-binding protein NELL2 (819 aa).

An N-terminal signal peptide occupies residues 1-24 (MHAMESRVLLRTFCVILGLGAVWG). Residues asparagine 56, asparagine 228, asparagine 296, and asparagine 301 are each glycosylated (N-linked (GlcNAc...) asparagine). The region spanning 67-231 (PRSIKASTAT…AQCPDLNRTC (165 aa)) is the Laminin G-like domain. A VWFC 1 domain is found at 275-334 (RTCTVKGTTYRESESWTDGCKNCTCLNGTIQCETLVCPAPDCPPKSAPAYVDGKCCKECK). One can recognise an EGF-like 1 domain in the interval 400–442 (GYDFCSEKHTCMENSVCRNLNDRAVCSCRDGFRALREDNAYCE). Intrachain disulfides connect cysteine 404/cysteine 416, cysteine 410/cysteine 425, and cysteine 427/cysteine 441. Ca(2+) contacts are provided by aspartate 443, isoleucine 444, and glutamate 446. Residues 443-484 (DIDECAEGRHYCRENTMCVNTPGSFMCICKTGYIRIDDYSCT) form the EGF-like 2; calcium-binding domain. 9 cysteine pairs are disulfide-bonded: cysteine 447–cysteine 460, cysteine 454–cysteine 469, cysteine 471–cysteine 483, cysteine 489–cysteine 502, cysteine 496–cysteine 511, cysteine 513–cysteine 524, cysteine 528–cysteine 538, cysteine 532–cysteine 544, and cysteine 546–cysteine 555. Ca(2+)-binding residues include asparagine 462, threonine 463, and serine 466. In terms of domain architecture, EGF-like 3; calcium-binding spans 485-525 (EHDECLTNQHNCDENALCFNTVGGHNCVCKPGYTGNGTTCK). Residue asparagine 520 is glycosylated (N-linked (GlcNAc...) asparagine). The 31-residue stretch at 526 to 556 (AFCKDGCRNGGACIAANVCACPQGFTGPSCE) folds into the EGF-like 4 domain. Residue threonine 551 is glycosylated (O-linked (GlcNAc...) threonine). Residues aspartate 558, isoleucine 559, and glutamate 561 each coordinate Ca(2+). The EGF-like 5; calcium-binding domain maps to 558-604 (DIDECSEGFVQCDSRANCINLPGWYHCECRDGYHDNGMFAPGGESCE). 3 disulfide bridges follow: cysteine 562–cysteine 575, cysteine 569–cysteine 584, and cysteine 586–cysteine 603. Residues asparagine 577, leucine 578, and tryptophan 581 each contribute to the Ca(2+) site. Ca(2+) is bound by residues aspartate 605, isoleucine 606, and glutamate 608. In terms of domain architecture, EGF-like 6; calcium-binding spans 605 to 640 (DIDECGTGRHSCTNDTICFNLDGGYDCRCPHGKNCT). Intrachain disulfides connect cysteine 609-cysteine 622, cysteine 616-cysteine 631, and cysteine 633-cysteine 639. An N-linked (GlcNAc...) asparagine glycan is attached at asparagine 618. Positions 624, 625, and 628 each coordinate Ca(2+). N-linked (GlcNAc...) asparagine glycosylation occurs at asparagine 638. Residues 701 to 759 (SQCLHQNGETVYNSGDTWVQDCRQCRCLQGEVDCWPLACPEVECEFSVLPENECCPRCV) enclose the VWFC 2 domain.

In terms of assembly, homotrimer. Interacts with NICOL1; this interaction triggers epididymal differentiation. Interacts (via EGF domains) with ROBO3 (via FN domains); binding to ROBO3 induces repulsive guidance cue for commissural axons. As to expression, expressed in brain and testis but not in epididymis. Expressed in regions flanking the commissural axon trajectory, including the ventral horn.

The protein resides in the secreted. In terms of biological role, plays multiple roles in neural tissues, regulates neuronal proliferation, survival, differentiation, polarization, as well as axon guidance and synaptic functions. Plays an important role in axon development during neuronal differentiation through the MAPK intracellular signaling pathway. Via binding to its receptor ROBO3, plays a role in axon guidance, functioning as a repulsive axon guidance cue that contributes to commissural axon guidance to the midline. Required for neuron survival through the modulation of MAPK signaling pathways too. Involved in the regulation of hypothalamic GNRH secretion and the control of puberty. Its function is as follows. Epididymal-secreted protein that signals through a ROS1-pathway to regulate the epididymal initial segment (IS) maturation, sperm maturation and male fertility. This is Protein kinase C-binding protein NELL2 from Mus musculus (Mouse).